The primary structure comprises 505 residues: Protein DETOXIFICATION 50 (505 aa).

The next 12 membrane-spanning stretches (helical) occupy residues 46–66 (LVLT…FLGG), 78–98 (AAAF…MGVE), 121–141 (IILL…MEKI), 155–175 (AHIF…LHPL), 194–214 (IASF…GLGI), 219–239 (LSGV…ICFF), 275–295 (ISVC…GFLL), 305–325 (GILI…SLGV), 344–364 (AAIV…AFTV), 380–400 (IMKL…GNCP), 424–444 (AFYA…GFGF), and 446–466 (GLWL…MAAT).

The protein belongs to the multi antimicrobial extrusion (MATE) (TC 2.A.66.1) family. Preferentially expressed in rosette leaves. Detected mainly in the vascular tissues and guard cells. Mostly detected at reproductive stages in young anthers, in mature pollens and during pollen germination on the pistil. Also expressed in developing seeds.

It localises to the cell membrane. It is found in the late endosome membrane. Functions as a multidrug and toxin extrusion transporter in the export of abscisic acid (ABA) in guard cells. Plays a role in ABA-mediated growth inhibition and responses to drought conditions. May act as a negative regulator of hypocotyl cell elongation in the light. The chain is Protein DETOXIFICATION 50 from Arabidopsis thaliana (Mouse-ear cress).